The chain runs to 116 residues: NADH-ubiquinone oxidoreductase chain 3 (116 aa).

A run of 3 helical transmembrane segments spans residues 3–23 (LIST…LVSF), 56–76 (FFLI…LLPL), and 87–107 (LTFM…IYEW).

The protein belongs to the complex I subunit 3 family.

The protein localises to the mitochondrion membrane. The catalysed reaction is a ubiquinone + NADH + 5 H(+)(in) = a ubiquinol + NAD(+) + 4 H(+)(out). Core subunit of the mitochondrial membrane respiratory chain NADH dehydrogenase (Complex I) that is believed to belong to the minimal assembly required for catalysis. Complex I functions in the transfer of electrons from NADH to the respiratory chain. The immediate electron acceptor for the enzyme is believed to be ubiquinone. The chain is NADH-ubiquinone oxidoreductase chain 3 (MT-ND3) from Gadus morhua (Atlantic cod).